Here is a 178-residue protein sequence, read N- to C-terminus: Nicotinamide-nucleotide adenylyltransferase (178 aa).

This sequence belongs to the archaeal NMN adenylyltransferase family.

It is found in the cytoplasm. It carries out the reaction beta-nicotinamide D-ribonucleotide + ATP + H(+) = diphosphate + NAD(+). The protein operates within cofactor biosynthesis; NAD(+) biosynthesis; NAD(+) from nicotinamide D-ribonucleotide: step 1/1. This chain is Nicotinamide-nucleotide adenylyltransferase, found in Thermoplasma volcanium (strain ATCC 51530 / DSM 4299 / JCM 9571 / NBRC 15438 / GSS1).